Here is a 143-residue protein sequence, read N- to C-terminus: Sirohydrochlorin cobaltochelatase (143 aa).

H9 functions as the Proton acceptor in the catalytic mechanism. H9 is a binding site for Co(2+). H9 lines the Ni(2+) pocket. Residues E45 and L70–H75 each bind substrate. H75 is a binding site for Co(2+). Ni(2+) is bound at residue H75.

This sequence belongs to the CbiX family. CbiXS subfamily. In terms of assembly, homotetramer; dimer of dimers.

The enzyme catalyses Co-sirohydrochlorin + 2 H(+) = sirohydrochlorin + Co(2+). The catalysed reaction is Ni-sirohydrochlorin + 2 H(+) = sirohydrochlorin + Ni(2+). The protein operates within cofactor biosynthesis; adenosylcobalamin biosynthesis; cob(II)yrinate a,c-diamide from sirohydrochlorin (anaerobic route): step 1/10. Functionally, catalyzes the insertion of Co(2+) into sirohydrochlorin as part of the anaerobic pathway to cobalamin biosynthesis. Involved in the biosynthesis of the unique nickel-containing tetrapyrrole coenzyme F430, the prosthetic group of methyl-coenzyme M reductase (MCR), which plays a key role in methanogenesis and anaerobic methane oxidation. Catalyzes the insertion of Ni(2+) into sirohydrochlorin to yield Ni-sirohydrochlorin. The chain is Sirohydrochlorin cobaltochelatase from Methanocaldococcus jannaschii (strain ATCC 43067 / DSM 2661 / JAL-1 / JCM 10045 / NBRC 100440) (Methanococcus jannaschii).